Reading from the N-terminus, the 378-residue chain is Signal peptide peptidase (378 aa).

Residues 1–27 are disordered; that stretch reads MDSAVSDPHNGSAEAGTPANGTTRPPS. Topologically, residues 1 to 31 are lumenal; that stretch reads MDSAVSDPHNGSAEAGTPANGTTRPPSTPEG. Residues Asn10 and Asn20 are each glycosylated (N-linked (GlcNAc...) asparagine). Residues 32–52 form a helical membrane-spanning segment; sequence IALAYGSLLLMALLPIFFGAL. At 53–77 the chain is on the cytoplasmic side; that stretch reads RSVRCARGKSSSDMPETITSRDAAR. A helical transmembrane segment spans residues 78–98; the sequence is FPIIASCTLLGLYLFFKIFSQ. Over 99–100 the chain is Lumenal; the sequence is EY. Residues 101–121 form a helical membrane-spanning segment; that stretch reads INLLLSMYFFVLGILALSHTI. At 122–157 the chain is on the cytoplasmic side; the sequence is SPFMNKFFPANFPNRQYQLLFTQGSGENKEEIINYE. Residues 158–178 form a helical membrane-spanning segment; sequence FDTKDLVCLGLSSVVGVWYLL. Residues 179 to 181 lie on the Lumenal side of the membrane; that stretch reads RKH. A helical transmembrane segment spans residues 182-202; it reads WIANNLFGLAFSLNGVELLHL. The Cytoplasmic segment spans residues 203–209; that stretch reads NNVSTGC. The helical transmembrane segment at 210–230 threads the bilayer; the sequence is ILLGGLFIYDIFWVFGTNVMV. Asp219 is an active-site residue. Topologically, residues 231 to 256 are lumenal; that stretch reads TVAKSFEAPIKLVFPQDLLEKGLEAD. The helical transmembrane segment at 257 to 277 threads the bilayer; sequence NFAMLGLGDIVIPGIFIALLL. Asp265 is an active-site residue. Residues 278–290 are Cytoplasmic-facing; sequence RFDISLKKNTHTY. Residues 291–311 traverse the membrane as a helical segment; that stretch reads FYTSFAAYIFGLGLTIFIMHI. The Lumenal portion of the chain corresponds to 312–314; the sequence is FKH. A helical transmembrane segment spans residues 315–335; the sequence is AQPALLYLVPACIGFPVLVAL. Residues 317-319 carry the PAL motif; sequence PAL. The Cytoplasmic segment spans residues 336–378; it reads AKGEVAEMFSYEESNPKDPAAETESKEESTEASASKRLEKKEK. Positions 346 to 378 are disordered; the sequence is YEESNPKDPAAETESKEESTEASASKRLEKKEK. A compositionally biased stretch (basic and acidic residues) spans 349–378; it reads SNPKDPAAETESKEESTEASASKRLEKKEK. Position 368 is a phosphoserine (Ser368).

This sequence belongs to the peptidase A22B family. In terms of assembly, monomer. Homodimer. Interacts with RNF139. Interacts with DERL1 and XBP1 isoform 1. Widely expressed with highest levels in liver and kidney. In the brain, expressed predominantly in hippocampus, amygdala, piriform cortex, choroid plexus and arcuate nucleus of the hypothalamic area. Isoform 1 is more strongly expressed than isoform 4 in most tissues except brain and skeletal muscle where isoform 4 is the dominant isoform and in testis where isoform 1 and isoform 4 are expressed at similar levels. In the brain, isoform 4 is not detected in the choroid plexus.

It is found in the endoplasmic reticulum membrane. The protein localises to the membrane. Its subcellular location is the cell membrane. In terms of biological role, catalyzes intramembrane proteolysis of signal peptides that have been removed from precursors of secretory and membrane proteins, resulting in the release of the fragment from the ER membrane into the cytoplasm. Required to generate lymphocyte cell surface (HLA-E) epitopes derived from MHC class I signal peptides. Involved in the intramembrane cleavage of the integral membrane protein PSEN1. Cleaves the integral membrane protein XBP1 isoform 1 in a DERL1/RNF139-dependent manner. May play a role in graft rejection. This chain is Signal peptide peptidase, found in Mus musculus (Mouse).